A 218-amino-acid chain; its full sequence is Embryonic polyadenylate-binding protein 2-A (218 aa).

A compositionally biased stretch (basic and acidic residues) spans methionine 1–glycine 16. 2 disordered regions span residues methionine 1–glutamate 26 and arginine 169–tyrosine 218. Positions arginine 93–threonine 170 constitute an RRM domain. The segment covering phenylalanine 205–tyrosine 218 has biased composition (low complexity).

It is found in the cytoplasm. In terms of biological role, binds the poly(A) tail of mRNA. Unable to interact with the cap-binding complex and is therefore unlikely to be involved in translation initiation. The polypeptide is Embryonic polyadenylate-binding protein 2-A (Pabpn1l-a) (Xenopus laevis (African clawed frog)).